A 177-amino-acid polypeptide reads, in one-letter code: Negative modulator of initiation of replication (177 aa).

The protein belongs to the SeqA family. As to quaternary structure, homodimer. Polymerizes to form helical filaments.

It localises to the cytoplasm. Functionally, negative regulator of replication initiation, which contributes to regulation of DNA replication and ensures that replication initiation occurs exactly once per chromosome per cell cycle. Binds to pairs of hemimethylated GATC sequences in the oriC region, thus preventing assembly of replication proteins and re-initiation at newly replicated origins. Repression is relieved when the region becomes fully methylated. This chain is Negative modulator of initiation of replication, found in Vibrio cholerae serotype O1 (strain ATCC 39315 / El Tor Inaba N16961).